We begin with the raw amino-acid sequence, 105 residues long: U2-lycotoxin-Ls1d (105 aa).

An N-terminal signal peptide occupies residues 1-17; the sequence is MIKYVLISALLVVAVYS. The propeptide occupies 18–41; that stretch reads FTIEDNEDALLEEAEDELDTEEER. 4 disulfide bridges follow: Cys51-Cys67, Cys58-Cys97, Cys60-Cys83, and Cys69-Cys81.

The protein belongs to the neurotoxin 04 (omega-agtx) family. 01 (type I omega-agtx) subfamily. Expressed by the venom gland.

Its subcellular location is the secreted. Insecticidal to house crickets. It induces an excitatory slow-onset impact that leads to irreversible spastic paralysis. It also modifies human voltage-gated potassium channel Kv1.5/KCNA5. Most likely, it binds to the voltage-sensing domain of the channel, suggesting it does not block the pore but prevents its opening at physiological membrane potentials. The recombinant peptide binds to the channel in an irreversible manner and slows down the hKv1.5 current activation kinetics. It is not toxic to mice, when intracranially injected (at 0.5 ug/g mouse). In Lycosa singoriensis (Wolf spider), this protein is U2-lycotoxin-Ls1d.